A 526-amino-acid chain; its full sequence is Outer capsid protein VP5 (526 aa).

The tract at residues 1 to 42 is involved in membrane permeabilization; that stretch reads MGKVIRSLNRFGKKVGNALTSNTAKKIYSTIGKAADEFLESE.

The protein belongs to the orbivirus VP5 family.

It localises to the virion. In terms of biological role, VP5 protein is one of the two proteins (with VP2) which constitute the virus particle outer capsid. Acts as a membrane permeabilization protein that mediates release of viral particles from endosomal compartments into the cytoplasm. Permeabilization activity is probably negatively regulated by VP2 and is triggered by endosomal degradation of VP2 and exposure to low pH. In Bluetongue virus 1 (isolate South Africa) (BTV 1), this protein is Outer capsid protein VP5 (Segment-6).